Here is a 287-residue protein sequence, read N- to C-terminus: uncharacterized protein (287 aa).

The next 2 helical transmembrane spans lie at 12 to 32 (IILL…GAAL) and 217 to 237 (YTIG…VLIV).

It localises to the cell membrane. This is an uncharacterized protein from Mycoplasma pneumoniae (strain ATCC 29342 / M129 / Subtype 1) (Mycoplasmoides pneumoniae).